The primary structure comprises 293 residues: MPWIQIKINSTGGQAETLSDALMENGAVSVTFQDSHDNPVFEPLPGETLLWGDTDVIGLFDAETEMSAVIAELENHPALGAGFRHKIEQIEDKDWEREWMDNFHPMQFGHRLWICPSWREIPEPDAVNVMLDPGLAFGTGTHPTTALCLQWLDGLDLAGKTVIDFGCGSGILAIAALKLGAARAIGIDIDPQAIQASRDNAERNGVSGRLELYLPKDQPADLSADVVVANILAGPLRELAPLIGCLPRQGGLLGLSGILASQAESVCEAYREKFALDPVAEREEWCRITGVHR.

S-adenosyl-L-methionine is bound by residues T145, G166, D188, and N230.

It belongs to the methyltransferase superfamily. PrmA family.

It is found in the cytoplasm. It catalyses the reaction L-lysyl-[protein] + 3 S-adenosyl-L-methionine = N(6),N(6),N(6)-trimethyl-L-lysyl-[protein] + 3 S-adenosyl-L-homocysteine + 3 H(+). Functionally, methylates ribosomal protein L11. The protein is Ribosomal protein L11 methyltransferase of Edwardsiella ictaluri (strain 93-146).